The sequence spans 460 residues: Bifunctional protein GlmU (460 aa).

The interval 1–235 (MALSAAIVLA…PLTVEGVNDR (235 aa)) is pyrophosphorylase. UDP-N-acetyl-alpha-D-glucosamine-binding positions include 9-12 (LAAG), lysine 23, glutamine 76, and 81-82 (GT). Mg(2+) is bound at residue aspartate 109. UDP-N-acetyl-alpha-D-glucosamine-binding residues include glycine 146, glutamate 161, asparagine 176, and asparagine 233. Mg(2+) is bound at residue asparagine 233. A linker region spans residues 236–256 (VQLAALSKTYNRRVCERWMRD). The tract at residues 257-460 (GVTILDPETT…VEGWKPAWER (204 aa)) is N-acetyltransferase. Residues arginine 338 and lysine 356 each contribute to the UDP-N-acetyl-alpha-D-glucosamine site. Residue histidine 368 is the Proton acceptor of the active site. The UDP-N-acetyl-alpha-D-glucosamine site is built by tyrosine 371 and asparagine 382. Acetyl-CoA is bound by residues 391 to 392 (NY) and alanine 428.

In the N-terminal section; belongs to the N-acetylglucosamine-1-phosphate uridyltransferase family. It in the C-terminal section; belongs to the transferase hexapeptide repeat family. Homotrimer. Requires Mg(2+) as cofactor.

The protein localises to the cytoplasm. The catalysed reaction is alpha-D-glucosamine 1-phosphate + acetyl-CoA = N-acetyl-alpha-D-glucosamine 1-phosphate + CoA + H(+). It carries out the reaction N-acetyl-alpha-D-glucosamine 1-phosphate + UTP + H(+) = UDP-N-acetyl-alpha-D-glucosamine + diphosphate. Its pathway is nucleotide-sugar biosynthesis; UDP-N-acetyl-alpha-D-glucosamine biosynthesis; N-acetyl-alpha-D-glucosamine 1-phosphate from alpha-D-glucosamine 6-phosphate (route II): step 2/2. It functions in the pathway nucleotide-sugar biosynthesis; UDP-N-acetyl-alpha-D-glucosamine biosynthesis; UDP-N-acetyl-alpha-D-glucosamine from N-acetyl-alpha-D-glucosamine 1-phosphate: step 1/1. It participates in bacterial outer membrane biogenesis; LPS lipid A biosynthesis. Catalyzes the last two sequential reactions in the de novo biosynthetic pathway for UDP-N-acetylglucosamine (UDP-GlcNAc). The C-terminal domain catalyzes the transfer of acetyl group from acetyl coenzyme A to glucosamine-1-phosphate (GlcN-1-P) to produce N-acetylglucosamine-1-phosphate (GlcNAc-1-P), which is converted into UDP-GlcNAc by the transfer of uridine 5-monophosphate (from uridine 5-triphosphate), a reaction catalyzed by the N-terminal domain. The chain is Bifunctional protein GlmU from Bifidobacterium longum (strain DJO10A).